A 299-amino-acid polypeptide reads, in one-letter code: Ribonuclease 3-like protein 3 (299 aa).

Positions Val39 to Asn183 constitute an RNase III domain. Mg(2+) is bound by residues Glu79, Asp169, and Glu172. Residues His209–Glu273 enclose the DRBM domain. The segment at Thr274–Ser299 is disordered. Residues Leu275 to Phe291 are compositionally biased toward polar residues.

It depends on Mg(2+) as a cofactor. The cofactor is Mn(2+).

Cleaves double-stranded RNA (dsRNA). The polypeptide is Ribonuclease 3-like protein 3 (Oryza sativa subsp. japonica (Rice)).